Reading from the N-terminus, the 91-residue chain is Small ribosomal subunit protein uS19 (91 aa).

The protein belongs to the universal ribosomal protein uS19 family.

In terms of biological role, protein S19 forms a complex with S13 that binds strongly to the 16S ribosomal RNA. This Psychrobacter arcticus (strain DSM 17307 / VKM B-2377 / 273-4) protein is Small ribosomal subunit protein uS19.